The primary structure comprises 485 residues: Glutathione gamma-glutamylcysteinyltransferase 1 (485 aa).

The Peptidase C83 domain occupies 1-221; it reads MAMASLYRRS…GFMLISRPHR (221 aa). Active-site residues include Cys56, His162, and Asp180.

It belongs to the phytochelatin synthase family. In terms of tissue distribution, expressed in roots and shoots.

The catalysed reaction is [Glu(-Cys)](n)-Gly + glutathione + H(+) = [Glu(-Cys)](n+1)-Gly + glycine. With respect to regulation, requires cadmium for activity. Also activated in vitro or in heterologous system by Ag(+), Hg(+), Zn(2+), Cu(2+), Fe(2+) or Fe(3+) ions, but not by Co(2+) or Ni(2+) ions. Involved in the synthesis of phytochelatins (PC) and homophytochelatins (hPC), the heavy-metal-binding peptides of plants. Also involved in glutathione-conjugates degradation. In Arabidopsis thaliana (Mouse-ear cress), this protein is Glutathione gamma-glutamylcysteinyltransferase 1 (PCS1).